A 388-amino-acid polypeptide reads, in one-letter code: Gastricsin (388 aa).

An N-terminal signal peptide occupies residues 1-16 (MKWMVVAFICLQLLEA). Residues 17–59 (TVVKVPLKKFKSIRETMKEKGLLWEFLKTHKHDPARKYRVSDL) constitute a propeptide, activation peptide. Residues 73-385 (YFGEISIGTP…DLGNNRVGFA (313 aa)) form the Peptidase A1 domain. Aspartate 91 is an active-site residue. 2 cysteine pairs are disulfide-bonded: cysteine 104/cysteine 109 and cysteine 267/cysteine 271. Aspartate 276 is an active-site residue. Residues cysteine 310 and cysteine 343 are joined by a disulfide bond.

Belongs to the peptidase A1 family.

It is found in the secreted. The enzyme catalyses More restricted specificity than pepsin A, but shows preferential cleavage at Tyr-|-Xaa bonds. High activity on hemoglobin.. With respect to regulation, inhibited by pepstatin. Functionally, hydrolyzes a variety of proteins. This Callithrix jacchus (White-tufted-ear marmoset) protein is Gastricsin (PGC).